The primary structure comprises 329 residues: Glycerol-3-phosphate dehydrogenase [NAD(P)+] (329 aa).

Residues Trp-11, Arg-30, and Lys-103 each contribute to the NADPH site. Residues Lys-103, Gly-132, and Ser-134 each coordinate sn-glycerol 3-phosphate. NADPH is bound at residue Ala-136. Lys-187, Asp-240, Ser-250, Arg-251, and Asn-252 together coordinate sn-glycerol 3-phosphate. The active-site Proton acceptor is the Lys-187. Arg-251 is a binding site for NADPH. 2 residues coordinate NADPH: Val-275 and Glu-277.

It belongs to the NAD-dependent glycerol-3-phosphate dehydrogenase family.

The protein localises to the cytoplasm. The catalysed reaction is sn-glycerol 3-phosphate + NAD(+) = dihydroxyacetone phosphate + NADH + H(+). The enzyme catalyses sn-glycerol 3-phosphate + NADP(+) = dihydroxyacetone phosphate + NADPH + H(+). It participates in membrane lipid metabolism; glycerophospholipid metabolism. In terms of biological role, catalyzes the reduction of the glycolytic intermediate dihydroxyacetone phosphate (DHAP) to sn-glycerol 3-phosphate (G3P), the key precursor for phospholipid synthesis. This chain is Glycerol-3-phosphate dehydrogenase [NAD(P)+], found in Methylobacillus flagellatus (strain ATCC 51484 / DSM 6875 / VKM B-1610 / KT).